The primary structure comprises 222 residues: Dense granule protein 3 (222 aa).

A run of 2 helical transmembrane segments spans residues 22-42 and 162-182; these read LIPFLVPFVVFLVAAALGGLA and IPGYFVVINAILAAYYIRKVL. Positions 219 to 222 match the Prevents secretion from ER motif; that stretch reads KKQT.

Homodimer. Interacts (via N-terminus) with human host CAMLG (via N-terminus).

The protein localises to the cytoplasm. The protein resides in the host endoplasmic reticulum. It is found in the parasitophorous vacuole membrane. Functionally, direct host-parasite interaction occurs at the cytoplasmic faces of the parasitophorous vacuole membrane (PVM) and the host endoplasmic reticulum (ER) membrane via GRA3 and host CAMLG association. Direct insertion of GRA3 ER retrieval motif into the host ER membrane contributes to the host ER recruitment to the PVM. The protein is Dense granule protein 3 of Toxoplasma gondii.